The following is a 37-amino-acid chain: Potassium channel toxin alpha-KTx 15.3 (37 aa).

Glutamine 1 is modified (pyrrolidone carboxylic acid). 3 disulfide bridges follow: cysteine 8/cysteine 28, cysteine 13/cysteine 33, and cysteine 17/cysteine 35.

As to expression, expressed by the venom gland.

It localises to the secreted. Inhibits A-type (Kv4) voltage-gated potassium channels of striated neurons (Ki=131 nM), probably by acting as a pore blocker. Has also been shown to block ERG1/Kv11.1/KCNH2 potassium channels (IC(50)=7.9 uM). The presence of the Kv4-associated proteins DPP6 or DPP10 is mandatory to have high-affinity blockade of Kv4.2/KCND2 and Kv4.3/KCND3 channels (80-90% inhibition at 500 nM of toxin). In contrast, the presence of the Kv4-associated protein KChIP1/KCNIP1 does not enhance the affinity blockade (only 40% inhibition at 500 nM). In adult rat brain, the toxin binds to sites in the striatum, and cerebellum. It shares the same target in rat brain than AaTX1 (AC Q867F4) and BmTX3 (AC Q8I0L5). In DPP6 knockout mice, A-type currents are about 20-fold less affected by the toxin. In rodent models of Parkinson's disease, the toxin reduces motor symptoms and emotional and cognitive symptoms. This is Potassium channel toxin alpha-KTx 15.3 from Androctonus mauritanicus mauritanicus (Scorpion).